The chain runs to 66 residues: Small vasohibin-binding protein (66 aa).

A compositionally biased stretch (basic and acidic residues) spans 1 to 23 (MDPPARKEKPKVKEPVSRIEKAK). The interval 1–32 (MDPPARKEKPKVKEPVSRIEKAKQKSAQQELK) is disordered. A coiled-coil region spans residues 5 to 52 (ARKEKPKVKEPVSRIEKAKQKSAQQELKQRQRAEIYALNRVMTELEQQ).

This sequence belongs to the SVBP family. As to quaternary structure, interacts with VASH1 and VASH2.

Its subcellular location is the cytoplasm. The protein localises to the secreted. The protein resides in the cytoskeleton. Enhances the tyrosine carboxypeptidase activity of VASH1 and VASH2, thereby promoting the removal of the C-terminal tyrosine residue of alpha-tubulin. Also required to enhance the solubility and secretion of VASH1 and VASH2. Plays a role in axon and excitatory synapse formation. This Bos taurus (Bovine) protein is Small vasohibin-binding protein.